The chain runs to 104 residues: Large ribosomal subunit protein uL24 (104 aa).

The protein belongs to the universal ribosomal protein uL24 family. In terms of assembly, part of the 50S ribosomal subunit.

Functionally, one of two assembly initiator proteins, it binds directly to the 5'-end of the 23S rRNA, where it nucleates assembly of the 50S subunit. In terms of biological role, one of the proteins that surrounds the polypeptide exit tunnel on the outside of the subunit. This chain is Large ribosomal subunit protein uL24, found in Pseudomonas entomophila (strain L48).